The primary structure comprises 59 residues: Large ribosomal subunit protein uL30 (59 aa).

This sequence belongs to the universal ribosomal protein uL30 family. In terms of assembly, part of the 50S ribosomal subunit.

The sequence is that of Large ribosomal subunit protein uL30 from Enterococcus faecalis (strain ATCC 700802 / V583).